Reading from the N-terminus, the 403-residue chain is Tyrosine--tRNA ligase (403 aa).

The short motif at 45–54 (PTAPDLHLGH) is the 'HIGH' region element. The 'KMSKS' region signature appears at 229 to 233 (KMSKS). K232 lines the ATP pocket. Residues 341–402 (VLLGRLLAEA…GKRRFARIVF (62 aa)) form the S4 RNA-binding domain.

This sequence belongs to the class-I aminoacyl-tRNA synthetase family. TyrS type 2 subfamily. Homodimer.

It localises to the cytoplasm. It carries out the reaction tRNA(Tyr) + L-tyrosine + ATP = L-tyrosyl-tRNA(Tyr) + AMP + diphosphate + H(+). Functionally, catalyzes the attachment of tyrosine to tRNA(Tyr) in a two-step reaction: tyrosine is first activated by ATP to form Tyr-AMP and then transferred to the acceptor end of tRNA(Tyr). This Geobacter metallireducens (strain ATCC 53774 / DSM 7210 / GS-15) protein is Tyrosine--tRNA ligase.